Reading from the N-terminus, the 295-residue chain is Shikimate dehydrogenase (NADP(+)) (295 aa).

Shikimate-binding positions include 24-26 and Thr71; that span reads SRS. Lys75 functions as the Proton acceptor in the catalytic mechanism. NADP(+) is bound at residue Glu87. 2 residues coordinate shikimate: Asn96 and Asp111. NADP(+) is bound by residues 136–140, 160–165, and Met233; these read GAGGA and NRTASR. Tyr235 lines the shikimate pocket. Gly256 contacts NADP(+).

Belongs to the shikimate dehydrogenase family. Homodimer.

It carries out the reaction shikimate + NADP(+) = 3-dehydroshikimate + NADPH + H(+). It participates in metabolic intermediate biosynthesis; chorismate biosynthesis; chorismate from D-erythrose 4-phosphate and phosphoenolpyruvate: step 4/7. Its function is as follows. Involved in the biosynthesis of the chorismate, which leads to the biosynthesis of aromatic amino acids. Catalyzes the reversible NADPH linked reduction of 3-dehydroshikimate (DHSA) to yield shikimate (SA). This is Shikimate dehydrogenase (NADP(+)) from Cupriavidus taiwanensis (strain DSM 17343 / BCRC 17206 / CCUG 44338 / CIP 107171 / LMG 19424 / R1) (Ralstonia taiwanensis (strain LMG 19424)).